The sequence spans 829 residues: Leucine--tRNA ligase (829 aa).

The short motif at 34-44 (PYPSGNIHMGH) is the 'HIGH' region element. Positions 591–595 (KMSKS) match the 'KMSKS' region motif. Residue Lys594 coordinates ATP.

The protein belongs to the class-I aminoacyl-tRNA synthetase family.

The protein localises to the cytoplasm. The catalysed reaction is tRNA(Leu) + L-leucine + ATP = L-leucyl-tRNA(Leu) + AMP + diphosphate. In Ehrlichia canis (strain Jake), this protein is Leucine--tRNA ligase.